Here is an 812-residue protein sequence, read N- to C-terminus: Eukaryotic translation initiation factor 3 subunit C (812 aa).

Positions 1–105 (MSRFFSRGYH…SDESDDEGKK (105 aa)) are disordered. Composition is skewed to acidic residues over residues 17–40 (SEDEELLTSSEEELMSSSEEEVVS) and 48–59 (SESESAESDDDS). Residues 607–783 (FHQHINLDLI…EMLIFDKGDE (177 aa)) enclose the PCI domain.

The protein belongs to the eIF-3 subunit C family. In terms of assembly, component of the eukaryotic translation initiation factor 3 (eIF-3) complex.

The protein localises to the cytoplasm. Functionally, component of the eukaryotic translation initiation factor 3 (eIF-3) complex, which is involved in protein synthesis of a specialized repertoire of mRNAs and, together with other initiation factors, stimulates binding of mRNA and methionyl-tRNAi to the 40S ribosome. The eIF-3 complex specifically targets and initiates translation of a subset of mRNAs involved in cell proliferation. This Eremothecium gossypii (strain ATCC 10895 / CBS 109.51 / FGSC 9923 / NRRL Y-1056) (Yeast) protein is Eukaryotic translation initiation factor 3 subunit C.